A 484-amino-acid polypeptide reads, in one-letter code: Allantoinase, mitochondrial (484 aa).

6 residues coordinate Zn(2+): H76, H78, K163, H199, H251, and D324. The residue at position 163 (K163) is an N6-carboxylysine.

It belongs to the metallo-dependent hydrolases superfamily. Allantoinase family. As to quaternary structure, homotetramer. It depends on Zn(2+) as a cofactor. Post-translationally, carboxylation allows a single lysine to coordinate two zinc ions. As to expression, liver and kidney.

The protein resides in the mitochondrion. It catalyses the reaction (S)-allantoin + H2O = allantoate + H(+). It participates in nitrogen metabolism; (S)-allantoin degradation; allantoate from (S)-allantoin: step 1/1. This Aquarana catesbeiana (American bullfrog) protein is Allantoinase, mitochondrial (ALN).